The following is a 692-amino-acid chain: Elongation factor G (692 aa).

Positions 8–282 (EKTRNIGIMA…AIVDYLPAPT (275 aa)) constitute a tr-type G domain. GTP-binding positions include 17 to 24 (AHIDAGKT), 81 to 85 (DTPGH), and 135 to 138 (NKMD).

This sequence belongs to the TRAFAC class translation factor GTPase superfamily. Classic translation factor GTPase family. EF-G/EF-2 subfamily.

The protein resides in the cytoplasm. In terms of biological role, catalyzes the GTP-dependent ribosomal translocation step during translation elongation. During this step, the ribosome changes from the pre-translocational (PRE) to the post-translocational (POST) state as the newly formed A-site-bound peptidyl-tRNA and P-site-bound deacylated tRNA move to the P and E sites, respectively. Catalyzes the coordinated movement of the two tRNA molecules, the mRNA and conformational changes in the ribosome. This Pelotomaculum thermopropionicum (strain DSM 13744 / JCM 10971 / SI) protein is Elongation factor G.